Consider the following 499-residue polypeptide: Proline dehydrogenase 1, mitochondrial (499 aa).

The N-terminal 72 residues, 1–72 (MATRLLRTNF…LDLSDQARLF (72 aa)), are a transit peptide targeting the mitochondrion.

The protein belongs to the proline oxidase family. FAD serves as cofactor. Ubiquitous. Highest expression in pollen grains, in the stigma and in developing embryos.

It is found in the mitochondrion. It catalyses the reaction L-proline + a quinone = (S)-1-pyrroline-5-carboxylate + a quinol + H(+). The protein operates within amino-acid degradation; L-proline degradation into L-glutamate; L-glutamate from L-proline: step 1/2. In terms of biological role, converts proline to delta-1-pyrroline-5-carboxylate. The chain is Proline dehydrogenase 1, mitochondrial (POX1) from Arabidopsis thaliana (Mouse-ear cress).